A 667-amino-acid chain; its full sequence is Probable potassium transport system protein Kup (667 aa).

The next 12 helical transmembrane spans lie at 16–36, 58–78, 101–121, 146–166, 167–187, 221–241, 253–273, 294–314, 343–363, 373–393, 399–419, and 431–451; these read GFII…LYTM, VSLI…LIAL, WLII…ALTP, TNVI…QRFG, TGVI…VLGI, IFIL…YSDL, WPFV…WILA, VYLV…LISG, LYIP…VLYF, YGLA…YYLI, PLLA…FFLA, and VVVL…GTVI.

It belongs to the HAK/KUP transporter (TC 2.A.72) family.

Its subcellular location is the cell membrane. It carries out the reaction K(+)(in) + H(+)(in) = K(+)(out) + H(+)(out). Functionally, transport of potassium into the cell. Likely operates as a K(+):H(+) symporter. The polypeptide is Probable potassium transport system protein Kup (Streptococcus equi subsp. zooepidemicus (strain MGCS10565)).